Consider the following 618-residue polypeptide: MCGIVGYAGRNAAAPVIIESLKKLEYRGYDSAGITVLSKGIETYKAVGKIVNLEVEIPKNLGGTVGIGHTRWATHGRPSTKNAHPHNSGGNPGKISLVHNGIIENYMALKEQLTGEGYVFNSETDTEVIAHLVHKHIYGKPDGKEAKCELLVGLREALKEIEGSYALAILSADEPGKLVLARKDSPLVIGLGKGENFAASDVTAFLNHTRDVVFVNDFETAVLSPTSVEIFDREGKPREKKIEKIEWDFEAAEKAGYEHFMLKEIHEQVTAIHNTLAGKVSELEGDIYLKELNLSEDEIRKLARVQILACGTSWHAGLLGKYLFEQLAGIHCDIDICSEYRYRNPVMNEGTLAIAITQSGETADTLAAVREIMSYNCPTLAITNVVGSTITREANSVLYTRAGPEIGVAATKTFTTQLTLLYLLAVKFALVRDRLSPDYVKSFITDLRKVPGQIQQILNQKEAIKECAEGFARSKSYFFLGRHLNYPIALEGALKLKEISYVHAEGFAAGELKHGPIALLDEGTPVVAIATRGQTYEKMLSNIKEVKARDAFVIAVADNKDTEITKYVDVVLRVPQSDELLAPLLSIVVLQLLAYYTALARNCSIDKPRNLAKSVTVE.

The active-site Nucleophile; for GATase activity is Cys-2. A Glutamine amidotransferase type-2 domain is found at 2 to 226 (CGIVGYAGRN…DFETAVLSPT (225 aa)). Positions 69–94 (HTRWATHGRPSTKNAHPHNSGGNPGK) are disordered. 2 SIS domains span residues 295 to 434 (SEDE…VRDR) and 467 to 608 (CAEG…IDKP). Catalysis depends on Lys-613, which acts as the For Fru-6P isomerization activity.

As to quaternary structure, homodimer.

The protein localises to the cytoplasm. The catalysed reaction is D-fructose 6-phosphate + L-glutamine = D-glucosamine 6-phosphate + L-glutamate. Catalyzes the first step in hexosamine metabolism, converting fructose-6P into glucosamine-6P using glutamine as a nitrogen source. In Methanosarcina acetivorans (strain ATCC 35395 / DSM 2834 / JCM 12185 / C2A), this protein is Glutamine--fructose-6-phosphate aminotransferase [isomerizing].